Here is a 525-residue protein sequence, read N- to C-terminus: Probable protein kinase UbiB (525 aa).

The Protein kinase domain maps to 118-500 (DFERVPVASA…QKRTNRLLQG (383 aa)). ATP is bound by residues 124-132 (VASASIAQV) and Lys-150. Residue Asp-285 is the Proton acceptor of the active site. A helical membrane pass occupies residues 501–521 (LLLFGVAVGVGAVLARAFLAL).

Belongs to the ABC1 family. UbiB subfamily.

It is found in the cell inner membrane. The protein operates within cofactor biosynthesis; ubiquinone biosynthesis [regulation]. Is probably a protein kinase regulator of UbiI activity which is involved in aerobic coenzyme Q (ubiquinone) biosynthesis. The chain is Probable protein kinase UbiB from Paraburkholderia phytofirmans (strain DSM 17436 / LMG 22146 / PsJN) (Burkholderia phytofirmans).